A 311-amino-acid chain; its full sequence is Formimidoylglutamase (311 aa).

Positions 127, 152, 154, 156, 236, and 238 each coordinate Mn(2+).

Belongs to the arginase family. Requires Mn(2+) as cofactor.

It carries out the reaction N-formimidoyl-L-glutamate + H2O = formamide + L-glutamate. The protein operates within amino-acid degradation; L-histidine degradation into L-glutamate; L-glutamate from N-formimidoyl-L-glutamate (hydrolase route): step 1/1. Its function is as follows. Catalyzes the conversion of N-formimidoyl-L-glutamate to L-glutamate and formamide. The chain is Formimidoylglutamase from Macrococcus caseolyticus (strain JCSC5402) (Macrococcoides caseolyticum).